Here is a 219-residue protein sequence, read N- to C-terminus: 7-cyano-7-deazaguanine synthase 2 (219 aa).

Position 8-18 (8-18 (YSGGMDSFTAL)) interacts with ATP. 4 residues coordinate Zn(2+): Cys-185, Cys-193, Cys-196, and Cys-199.

This sequence belongs to the QueC family. Zn(2+) is required as a cofactor.

The enzyme catalyses 7-carboxy-7-deazaguanine + NH4(+) + ATP = 7-cyano-7-deazaguanine + ADP + phosphate + H2O + H(+). The protein operates within purine metabolism; 7-cyano-7-deazaguanine biosynthesis. Catalyzes the ATP-dependent conversion of 7-carboxy-7-deazaguanine (CDG) to 7-cyano-7-deazaguanine (preQ(0)). In Colwellia psychrerythraea (strain 34H / ATCC BAA-681) (Vibrio psychroerythus), this protein is 7-cyano-7-deazaguanine synthase 2.